Here is a 562-residue protein sequence, read N- to C-terminus: Protoporphyrinogen oxidase 1, chloroplastic (562 aa).

A chloroplast-targeting transit peptide spans Met-1–Cys-48. Residues Gly-88 to Gly-93, Glu-115 to Ala-116, and Gly-137 to Ser-140 each bind FAD. The segment at Thr-274–Gly-302 is disordered. Over residues Ile-278–Leu-293 the composition is skewed to basic and acidic residues. FAD-binding positions include Val-323 and Val-536–Leu-538.

The protein belongs to the protoporphyrinogen/coproporphyrinogen oxidase family. Protoporphyrinogen oxidase subfamily. FAD serves as cofactor.

The protein localises to the plastid. Its subcellular location is the chloroplast thylakoid membrane. It localises to the chloroplast inner membrane. The catalysed reaction is protoporphyrinogen IX + 3 O2 = protoporphyrin IX + 3 H2O2. It functions in the pathway porphyrin-containing compound metabolism; protoporphyrin-IX biosynthesis; protoporphyrin-IX from protoporphyrinogen-IX: step 1/1. The protein operates within porphyrin-containing compound metabolism; chlorophyll biosynthesis. In terms of biological role, catalyzes the 6-electron oxidation of protoporphyrinogen-IX to form protoporphyrin-IX. This chain is Protoporphyrinogen oxidase 1, chloroplastic, found in Spinacia oleracea (Spinach).